Here is an 898-residue protein sequence, read N- to C-terminus: Histone-lysine N-methyltransferase mes-4 (898 aa).

The disordered stretch occupies residues 1–68 (MLPSSGDSSK…APILTNAPKD (68 aa)). Positions 36–51 (QRNATPQGAGSETSSN) are enriched in polar residues. 2 consecutive PHD-type zinc fingers follow at residues 126-214 (DSKC…CNLD) and 303-355 (IKAC…CVCG). Residues 537 to 665 (EKIKLAATLC…DGDEITFSYN (129 aa)) form the SET domain. The Post-SET domain maps to 671 to 687 (NLPDCECGAENCMGTMG). The segment at 689-847 (AKREKPEVAD…SLQTIQETGK (159 aa)) is disordered. Residues 692 to 704 (EKPEVADSSEKAA) show a composition bias toward basic and acidic residues. Basic residues predominate over residues 705–719 (KKNKSSKKKSVKNQN). 2 stretches are compositionally biased toward low complexity: residues 737–751 (ISPS…SSTS) and 761–773 (SQNK…NSNQ). Residues 774–788 (PVADTGSTLSTSTEL) show a composition bias toward polar residues. Residues 802-811 (SSRSRAASSS) are compositionally biased toward low complexity.

Belongs to the class V-like SAM-binding methyltransferase superfamily. Histone-lysine methyltransferase family. SET2 subfamily. In adults, it is predominantly expressed in the germline, and weakly expressed in intestinal cells.

The protein localises to the nucleus. It is found in the chromosome. It carries out the reaction L-lysyl(36)-[histone H3] + 2 S-adenosyl-L-methionine = N(6),N(6)-dimethyl-L-lysyl(36)-[histone H3] + 2 S-adenosyl-L-homocysteine + 2 H(+). Its function is as follows. Histone methyltransferase. Dimethylates 'Lys-36' of histone H3, a specific tag for epigenetic transcriptional activation. Plays a central role in early development and is responsible for all H3 'Lys-36' dimethylation until about the 40-cell stage. Indirectly involved in the global inactivation of the X chromosomes in germline cells, possibly by excluding the mes-2-mes-3-mes-6 repressive Polycomb complex from the autosomes. Not related to transcription elongation. Required for small-RNA-induced H3K27 trimethylation. May suppress sensitivity to RNAi. May regulate the expression of genes required for vulval development. This chain is Histone-lysine N-methyltransferase mes-4, found in Caenorhabditis elegans.